Consider the following 237-residue polypeptide: MKREQLYSGKAKTIYRTDDPDTLIAEFRNSLTAFNGEKKGEMELKGYYNAQISKKIFEMLEASGVKTHFVSMLTDIDMLVREVEIIKIEVIVRNIAAGSITRKYPIKEGTILKPPVLVFDFKSDEYGDPMLNDDIALALGIATREELAELRKLALRVNELLVPYLDEKGILLPDFKLEFGRREGEIVLADEISCDTCRFWDKKTGQSMDKDVFRFDKGDISKAYEEVARRIVPEIFE.

This sequence belongs to the SAICAR synthetase family.

The enzyme catalyses 5-amino-1-(5-phospho-D-ribosyl)imidazole-4-carboxylate + L-aspartate + ATP = (2S)-2-[5-amino-1-(5-phospho-beta-D-ribosyl)imidazole-4-carboxamido]succinate + ADP + phosphate + 2 H(+). The protein operates within purine metabolism; IMP biosynthesis via de novo pathway; 5-amino-1-(5-phospho-D-ribosyl)imidazole-4-carboxamide from 5-amino-1-(5-phospho-D-ribosyl)imidazole-4-carboxylate: step 1/2. The sequence is that of Phosphoribosylaminoimidazole-succinocarboxamide synthase from Methanosarcina mazei (strain ATCC BAA-159 / DSM 3647 / Goe1 / Go1 / JCM 11833 / OCM 88) (Methanosarcina frisia).